The sequence spans 852 residues: MPENLSSALETFKQQRNAAEAHYLKANRVSVFFREYTAAVETLLAALWAEHFQNSALCLMAVGGFGRGEPYPCSDVDLAVVSPAPLSDGIQEQIARFIQTLWDCKLMPSVKSGSVDELCESVRDDITGDTAFLEARFLFGNRQTADELAEKMNVQRNVAAFIEAKLVEMEHRHAKSQGSGAVLEPNIKSCPGGLRDIHTLLWIAKAQGLAANLPDLLKQRILTRAEAGMLSHGYRRLAHIRIRLHLNAKRAEDRLLFDLQPQVAESMGYQDENRRRQSEELMRVFYRAVKTVKQLGGILTPMLRSRVSSTPMRVTLRIDDDYIQVNNQIAARHTDIFFRRPEHIFKIVEIMQQRNDITALEPQTLRAWWGATRKINRSFYQNSENRRRFAGFFRSGNGLTQTLRFLNLYGVLGRYLPAWEKIVGLLQHDLFHIYPVDDHILAVVRNVRRLALDMHSHELPYASALMQSFEKQDILYLAAFFHDIAKGRGGDHAVQGIADARQFAADHFLTEEESDLLAWLVENHLLMSAVAQKEDIQDPGVLDAFCKRVQTHERLSALYLLTISDIRGTNPKLWNAWRASLLESLFHAAGRCLAGNDGNPHALFGRRRQEAADLLTRAAVPEKQQKKLWNALGSAYFARHQSREILWHAANLVHDFEPPIVRSRILPQSDSFQVMVFMPNGPRLFARLCRIFSRHGFDILAARAFITEHDYILDTFIVQIPSQHAPEDYPDIQSALEAELNSFIHGHTVAETQSCNRRISRRSRYMPIAPSITITPEEDYPDRYSVEITAVNRPFLLADMAEVFFAHNVSLRYAKISTLDERVEDSFTVFSPDLKNPKIQSSLKQALLEQLA.

Residues 1-318 are uridylyltransferase; sequence MPENLSSALE…STPMRVTLRI (318 aa). The tract at residues 319–672 is uridylyl-removing; it reads DDDYIQVNNQ…SRILPQSDSF (354 aa). The HD domain occupies 436 to 558; it reads VDDHILAVVR…VQTHERLSAL (123 aa). 2 consecutive ACT domains span residues 673 to 757 and 785 to 852; these read QVMV…SCNR and SVEI…EQLA.

It belongs to the GlnD family. Mg(2+) serves as cofactor.

It catalyses the reaction [protein-PII]-L-tyrosine + UTP = [protein-PII]-uridylyl-L-tyrosine + diphosphate. The catalysed reaction is [protein-PII]-uridylyl-L-tyrosine + H2O = [protein-PII]-L-tyrosine + UMP + H(+). Its activity is regulated as follows. Uridylyltransferase (UTase) activity is inhibited by glutamine, while glutamine activates uridylyl-removing (UR) activity. In terms of biological role, modifies, by uridylylation and deuridylylation, the PII regulatory proteins (GlnB and homologs), in response to the nitrogen status of the cell that GlnD senses through the glutamine level. Under low glutamine levels, catalyzes the conversion of the PII proteins and UTP to PII-UMP and PPi, while under higher glutamine levels, GlnD hydrolyzes PII-UMP to PII and UMP (deuridylylation). Thus, controls uridylylation state and activity of the PII proteins, and plays an important role in the regulation of nitrogen assimilation and metabolism. The protein is Bifunctional uridylyltransferase/uridylyl-removing enzyme of Neisseria gonorrhoeae (strain NCCP11945).